A 133-amino-acid polypeptide reads, in one-letter code: Large ribosomal subunit protein eL14 (133 aa).

The protein belongs to the eukaryotic ribosomal protein eL14 family.

The chain is Large ribosomal subunit protein eL14 (RPL14) from Griffithsia japonica (Red alga).